A 638-amino-acid polypeptide reads, in one-letter code: Phosphomethylpyrimidine synthase (638 aa).

Residues N235, M264, Y293, H329, 349–351, 390–393, and E429 each bind substrate; these read SRG and DGLR. Residue H433 participates in Zn(2+) binding. Y456 contributes to the substrate binding site. H497 provides a ligand contact to Zn(2+). The [4Fe-4S] cluster site is built by C577, C580, and C585.

This sequence belongs to the ThiC family. In terms of assembly, homodimer. [4Fe-4S] cluster is required as a cofactor.

It carries out the reaction 5-amino-1-(5-phospho-beta-D-ribosyl)imidazole + S-adenosyl-L-methionine = 4-amino-2-methyl-5-(phosphooxymethyl)pyrimidine + CO + 5'-deoxyadenosine + formate + L-methionine + 3 H(+). It participates in cofactor biosynthesis; thiamine diphosphate biosynthesis. Its function is as follows. Catalyzes the synthesis of the hydroxymethylpyrimidine phosphate (HMP-P) moiety of thiamine from aminoimidazole ribotide (AIR) in a radical S-adenosyl-L-methionine (SAM)-dependent reaction. The polypeptide is Phosphomethylpyrimidine synthase (Polaromonas naphthalenivorans (strain CJ2)).